Reading from the N-terminus, the 787-residue chain is MTQYMPLFRSCSSLRLVSQLHAHLLVTGRLRRDPLPVTKLIESYAFMGSPDSSRLVFEAFPYPDSFMYGVLIKCNVWCHLLDAAIDLYHRLVSETTQISKFVFPSVLRACAGSREHLSVGGKVHGRIIKGGVDDDAVIETSLLCMYGQTGNLSDAEKVFDGMPVRDLVAWSTLVSSCLENGEVVKALRMFKCMVDDGVEPDAVTMISVVEGCAELGCLRIARSVHGQITRKMFDLDETLCNSLLTMYSKCGDLLSSERIFEKIAKKNAVSWTAMISSYNRGEFSEKALRSFSEMIKSGIEPNLVTLYSVLSSCGLIGLIREGKSVHGFAVRRELDPNYESLSLALVELYAECGKLSDCETVLRVVSDRNIVAWNSLISLYAHRGMVIQALGLFRQMVTQRIKPDAFTLASSISACENAGLVPLGKQIHGHVIRTDVSDEFVQNSLIDMYSKSGSVDSASTVFNQIKHRSVVTWNSMLCGFSQNGNSVEAISLFDYMYHSYLEMNEVTFLAVIQACSSIGSLEKGKWVHHKLIISGLKDLFTDTALIDMYAKCGDLNAAETVFRAMSSRSIVSWSSMINAYGMHGRIGSAISTFNQMVESGTKPNEVVFMNVLSACGHSGSVEEGKYYFNLMKSFGVSPNSEHFACFIDLLSRSGDLKEAYRTIKEMPFLADASVWGSLVNGCRIHQKMDIIKAIKNDLSDIVTDDTGYYTLLSNIYAEEGEWEEFRRLRSAMKSSNLKKVPGYSAIEIDQKVFRFGAGEENRIQTDEIYRFLGNLQNLTNEEHVVDS.

The N-terminal 16 residues, 1 to 16, are a transit peptide targeting the mitochondrion; that stretch reads MTQYMPLFRSCSSLRL. PPR repeat units lie at residues 33-63, 64-98, 99-134, 135-165, 166-200, 201-235, 236-266, 267-301, 302-336, 338-368, 369-403, 404-434, 438-468, 469-503, 504-534, 538-568, 569-603, 604-638, and 639-669; these read DPLPVTKLIESYAFMGSPDSSRLVFEAFPYP, DSFMYGVLIKCNVWCHLLDAAIDLYHRLVSETTQI, SKFVFPSVLRACAGSREHLSVGGKVHGRIIKGGVDD, DAVIETSLLCMYGQTGNLSDAEKVFDGMPVR, DLVAWSTLVSSCLENGEVVKALRMFKCMVDDGVEP, DAVTMISVVEGCAELGCLRIARSVHGQITRKMFDL, DETLCNSLLTMYSKCGDLLSSERIFEKIAKK, NAVSWTAMISSYNRGEFSEKALRSFSEMIKSGIEP, NLVTLYSVLSSCGLIGLIREGKSVHGFAVRRELDP, YESLSLALVELYAECGKLSDCETVLRVVSDR, NIVAWNSLISLYAHRGMVIQALGLFRQMVTQRIKP, DAFTLASSISACENAGLVPLGKQIHGHVIRT, DEFVQNSLIDMYSKSGSVDSASTVFNQIKHR, SVVTWNSMLCGFSQNGNSVEAISLFDYMYHSYLEM, NEVTFLAVIQACSSIGSLEKGKWVHHKLIIS, DLFTDTALIDMYAKCGDLNAAETVFRAMSSR, SIVSWSSMINAYGMHGRIGSAISTFNQMVESGTKP, NEVVFMNVLSACGHSGSVEEGKYYFNLMKSFGVSP, and NSEHFACFIDLLSRSGDLKEAYRTIKEMPFL. The type E motif stretch occupies residues 674-749; the sequence is VWGSLVNGCR…VPGYSAIEID (76 aa). The segment at 750–780 is type E(+) motif; sequence QKVFRFGAGEENRIQTDEIYRFLGNLQNLTN.

The protein belongs to the PPR family. PCMP-E subfamily.

The protein resides in the mitochondrion. The polypeptide is Putative pentatricopeptide repeat-containing protein At1g69350, mitochondrial (PCMP-E66) (Arabidopsis thaliana (Mouse-ear cress)).